Consider the following 207-residue polypeptide: Transcriptional regulatory protein RcsA (207 aa).

The HTH luxR-type domain occupies 131–196 (LNMPTLSLSR…VIYHVVRLTD (66 aa)). Positions 155 to 174 (TIQISDQMNIKAKTVSSHKG) form a DNA-binding region, H-T-H motif.

It belongs to the RcsA family. As to quaternary structure, interacts with RcsB.

Functionally, component of the Rcs signaling system, which controls transcription of numerous genes. Binds, with RcsB, to the RcsAB box to regulate expression of genes. The sequence is that of Transcriptional regulatory protein RcsA from Escherichia coli O157:H7.